The primary structure comprises 283 residues: Undecaprenyl-diphosphatase (283 aa).

Transmembrane regions (helical) follow at residues 46-66 (PGVS…IAYF), 95-115 (VAMV…KFFW), 127-147 (VPSI…AECM), 154-174 (LGGV…LAVI), 200-220 (FSFL…LKSA), 227-247 (AGPL…WLAI), and 259-279 (TWIF…WWAF).

The protein belongs to the UppP family.

It is found in the cell inner membrane. The catalysed reaction is di-trans,octa-cis-undecaprenyl diphosphate + H2O = di-trans,octa-cis-undecaprenyl phosphate + phosphate + H(+). Its function is as follows. Catalyzes the dephosphorylation of undecaprenyl diphosphate (UPP). Confers resistance to bacitracin. In Synechococcus sp. (strain CC9902), this protein is Undecaprenyl-diphosphatase.